The sequence spans 527 residues: Amino acid transporter heavy chain SLC3A2 (527 aa).

Residues 1-31 (MSQDTEVDMKDVELNELEPEKQPMNAADGAA) form a disordered region. Over 1 to 75 (MSQDTEVDMK…AGSPGWVRTR (75 aa)) the chain is Cytoplasmic. Position 2 is a phosphoserine (Ser-2). Thr-5 bears the Phosphothreonine mark. The segment covering 7-21 (VDMKDVELNELEPEK) has biased composition (basic and acidic residues). Residue Lys-42 forms a Glycyl lysine isopeptide (Lys-Gly) (interchain with G-Cter in ubiquitin) linkage. Phosphoserine is present on Ser-58. Residue Lys-59 forms a Glycyl lysine isopeptide (Lys-Gly) (interchain with G-Cter in SUMO2) linkage. The chain crosses the membrane as a helical; Signal-anchor for type II membrane protein span at residues 76–98 (WALLLLFWLGWLGMLAGAVVIIV). Topologically, residues 99 to 527 (RAPRCRELPV…GLLLQFPFVA (429 aa)) are extracellular. Residues Asn-166, Asn-249, Asn-259, and Asn-263 are each glycosylated (N-linked (GlcNAc...) asparagine). Ser-300 bears the Phosphoserine mark. Asn-318, Asn-386, and Asn-400 each carry an N-linked (GlcNAc...) asparagine glycan. Ser-421 is subject to Phosphoserine. An N-linked (GlcNAc...) asparagine glycan is attached at Asn-510.

It belongs to the SLC3A transporter family. Disulfide-linked heterodimer with a non-glycosylated light chain (SLC7A5, SLC7A6, SLC7A7, SLC7A8, SLC7A10 or SLC7A11). Interacts with TLCD3A/CT120 and ICAM1. Constitutively and specifically associates with beta-1 integrins (alpha-2/beta-1, alpha-3/beta-1, alpha-5/beta-1 and alpha-6/beta-1), but minimally with alpha-4/beta-1. Interacts with LAPTM4B; recruits SLC3A2 and SLC7A5 to lysosomes to promote leucine uptake into these organelles and is required for mTORC1 activation. Phosphorylation on Ser-300 and on Ser-421 by ecto-protein kinases favors heterotypic cell-cell interactions. Post-translationally, N-glycosylated; N-glycosylation is crucial for trafficking and stability of SLC3A2 to the plasma membrane. In terms of tissue distribution, in brain expressed on capillary endothelia in cerebral cortex (at protein level). Highest expression in kidney, jejunum, ileum, colon, placenta, testis and spleen. Lower levels found in liver, lung and brain with weakest expression in heart. Expressed in retina, inner blood-retinal barrier of retina, retinal vascular endothelial cells. Also expressed in C6 glioma cells and in the retinal capillary endothelial cell line TR-iBRB2.

It localises to the apical cell membrane. Its subcellular location is the cell membrane. The protein localises to the cell junction. The protein resides in the lysosome membrane. It is found in the melanosome. It localises to the basolateral cell membrane. Functionally, acts as a chaperone that facilitates biogenesis and trafficking of functional transporters heterodimers to the plasma membrane. Forms heterodimer with SLC7 family transporters (SLC7A5, SLC7A6, SLC7A7, SLC7A8, SLC7A10 and SLC7A11), a group of amino-acid antiporters. Heterodimers function as amino acids exchangers, the specificity of the substrate depending on the SLC7A subunit. Heterodimers formed by SLC3A2/SLC7A6 or SLC3A2/SLC7A7 mediate the uptake of dibasic amino acids. Heterodimer SLC3A2/SLC7A11 functions as an antiporter by mediating the exchange of extracellular anionic L-cystine and intracellular L-glutamate across the cellular plasma membrane. SLC3A2/SLC7A10 translocates small neutral L- and D-amino acids across the plasma membrane. SLC3A2/SLC75 or SLC3A2/SLC7A8 translocates neutral amino acids with broad specificity, thyroid hormones and L-DOPA. SLC3A2 is essential for plasma membrane localization, stability, and the transport activity of SLC7A5 and SLC7A8. When associated with LAPTM4B, the heterodimer SLC7A5 is recruited to lysosomes to promote leucine uptake into these organelles, and thereby mediates mTORC1 activation. Modulates integrin-related signaling and is essential for integrin-dependent cell spreading, migration and tumor progression. The chain is Amino acid transporter heavy chain SLC3A2 from Rattus norvegicus (Rat).